Reading from the N-terminus, the 31-residue chain is Cyclotide Hyfl-A (31 aa).

The cyclopeptide (Ser-Asn) cross-link spans 1–31 (SISCGESCVYIPCTVTALVGCTCKDKVCYLN). Cystine bridges form between Cys-4-Cys-21, Cys-8-Cys-23, and Cys-13-Cys-28.

Belongs to the cyclotide family. Bracelet subfamily. Post-translationally, this is a cyclic peptide.

Probably participates in a plant defense mechanism. This Hybanthus floribundus (Greenviolet) protein is Cyclotide Hyfl-A.